We begin with the raw amino-acid sequence, 802 residues long: Probable inactive leucine-rich repeat receptor-like protein kinase At3g03770 (802 aa).

An N-terminal signal peptide occupies residues methionine 1–leucine 26. At glutamine 27 to alanine 391 the chain is on the extracellular side. N-linked (GlcNAc...) asparagine glycans are attached at residues asparagine 52 and asparagine 83. LRR repeat units follow at residues glutamate 71 to isoleucine 94, leucine 104 to leucine 128, serine 129 to leucine 152, alanine 153 to leucine 176, proline 177 to leucine 200, serine 201 to asparagine 225, glutamine 227 to serine 244, asparagine 245 to serine 268, leucine 269 to leucine 293, proline 294 to asparagine 317, and glutamine 319 to serine 341. The N-linked (GlcNAc...) asparagine glycan is linked to asparagine 135. An N-linked (GlcNAc...) asparagine glycan is attached at asparagine 190. Asparagine 300 and asparagine 313 each carry an N-linked (GlcNAc...) asparagine glycan. Residues leucine 392–leucine 412 form a helical membrane-spanning segment. At arginine 413–arginine 802 the chain is on the cytoplasmic side. In terms of domain architecture, Protein kinase spans phenylalanine 477–leucine 759. The segment at asparagine 761–arginine 802 is disordered. The span at serine 762–serine 777 shows a compositional bias: low complexity. Positions serine 791–arginine 802 are enriched in basic and acidic residues.

The protein belongs to the protein kinase superfamily. Ser/Thr protein kinase family.

It localises to the cell membrane. The protein is Probable inactive leucine-rich repeat receptor-like protein kinase At3g03770 of Arabidopsis thaliana (Mouse-ear cress).